A 24-amino-acid polypeptide reads, in one-letter code: Caerin-2.1 (24 aa).

Belongs to the frog skin active peptide (FSAP) family. Caerin subfamily. Expressed by the skin dorsal glands.

It localises to the secreted. Inhibits the formation of NO by neuronal nitric oxide synthase. In Litoria rothii (Roth's tree frog), this protein is Caerin-2.1.